The sequence spans 20 residues: Agglutinin beta-3 chain (20 aa).

The interval 1–20 is disordered; it reads GPNGKSQSIIVGPWGDRVTN.

It belongs to the jacalin lectin family. In terms of assembly, formed of four alpha chains and four beta chains.

In terms of biological role, D-galactose-specific lectin, binds the T-antigen structure Gal-beta1,3-GalNAc. The polypeptide is Agglutinin beta-3 chain (Maclura pomifera (Osage orange)).